The primary structure comprises 215 residues: Cytochrome b6 (215 aa).

The helical transmembrane segment at 32–52 threads the bilayer; sequence IFYCLGGITLTCFLVQVATGF. C35 contributes to the heme c binding site. Heme b contacts are provided by H86 and H100. 3 helical membrane passes run 90–110, 116–136, and 186–206; these read ASMM…TGGF, LTWV…VTGY, and LHTF…FLMI. Positions 187 and 202 each coordinate heme b.

It belongs to the cytochrome b family. PetB subfamily. The 4 large subunits of the cytochrome b6-f complex are cytochrome b6, subunit IV (17 kDa polypeptide, PetD), cytochrome f and the Rieske protein, while the 4 small subunits are PetG, PetL, PetM and PetN. The complex functions as a dimer. The cofactor is heme b. It depends on heme c as a cofactor.

It is found in the plastid. The protein localises to the chloroplast thylakoid membrane. Its function is as follows. Component of the cytochrome b6-f complex, which mediates electron transfer between photosystem II (PSII) and photosystem I (PSI), cyclic electron flow around PSI, and state transitions. This is Cytochrome b6 from Hordeum vulgare (Barley).